Reading from the N-terminus, the 369-residue chain is Cytokine receptor common subunit gamma (369 aa).

The first 22 residues, 1-22 (MLKPSLPFTSLLFLQLPLLGVG), serve as a signal peptide directing secretion. Over 23–262 (LNTTILTPNG…ENPFLFALEA (240 aa)) the chain is Extracellular. Residues asparagine 24, asparagine 71, asparagine 75, and asparagine 84 are each glycosylated (N-linked (GlcNAc...) asparagine). The cysteines at positions 62 and 72 are disulfide-linked. A disulfide bridge connects residues cysteine 102 and cysteine 115. The Fibronectin type-III domain occupies 156–253 (APENLTLHKL…IHWGSNTSKE (98 aa)). Asparagine 159 carries an N-linked (GlcNAc...) asparagine glycan. Cysteines 182 and 231 form a disulfide. The short motif at 237-241 (WSEWS) is the WSXWS motif element. Asparagine 249 is a glycosylation site (N-linked (GlcNAc...) asparagine). The helical transmembrane segment at 263-283 (VVISVGSMGLIISLLCVYFWL) threads the bilayer. At 284-369 (ERTMPRIPTL…PPCYTLKPET (86 aa)) the chain is on the cytoplasmic side. Positions 286-294 (TMPRIPTLK) match the Box 1 motif motif. Position 292 is a phosphothreonine (threonine 292).

It belongs to the type I cytokine receptor family. Type 5 subfamily. The gamma subunit is common to the IL2, IL4, IL7, IL15, IL21 and probably also the IL13 receptors. Interacts with SHB upon interleukin stimulation. Interacts with IL9. As to quaternary structure, (Microbial infection) Interacts with HTLV-1 accessory protein p12I.

It localises to the cell membrane. The protein resides in the cell surface. Its function is as follows. Common subunit for the receptors for a variety of interleukins. Probably in association with IL15RA, involved in the stimulation of neutrophil phagocytosis by IL15. This Homo sapiens (Human) protein is Cytokine receptor common subunit gamma (IL2RG).